The sequence spans 199 residues: Charged multivesicular body protein 1b (199 aa).

Coiled-coil stretches lie at residues 8 to 42 (LFNLKFAAKELNRNAKKCEKEEKTEKAKIKKAIQK) and 178 to 199 (TSVASTEQDELSQRLARLRDQV). The tract at residues 167 to 199 (ELPQGQTGSVGTSVASTEQDELSQRLARLRDQV) is disordered. Positions 170–183 (QGQTGSVGTSVAST) are enriched in polar residues. The MIT-interacting motif motif lies at 186–196 (DELSQRLARLR).

The protein belongs to the SNF7 family. Probable peripherally associated component of the endosomal sorting required for transport complex III (ESCRT-III).

Its subcellular location is the cytoplasm. It is found in the cytosol. It localises to the endosome. The protein resides in the late endosome membrane. Probable peripherally associated component of the endosomal sorting required for transport complex III (ESCRT-III) which is involved in multivesicular bodies (MVBs) formation and sorting of endosomal cargo proteins into MVBs. MVBs contain intraluminal vesicles (ILVs) that are generated by invagination and scission from the limiting membrane of the endosome and mostly are delivered to lysosomes enabling degradation of membrane proteins, such as stimulated growth factor receptors, lysosomal enzymes and lipids. The polypeptide is Charged multivesicular body protein 1b (chmp1b) (Xenopus laevis (African clawed frog)).